We begin with the raw amino-acid sequence, 125 residues long: 13 kDa ribonucleoprotein-associated protein (125 aa).

It belongs to the eukaryotic ribosomal protein eL8 family. In terms of assembly, component of the U3 snoRNP particle. Binds to the C'/D and B/C motifs in U3 snoRNA. Component of the 25S U4/U6.U5 tri-snRNP particle, a subcomplex of the spliceosome. Binds to the 5' stem-loop of U4 snRNA.

It localises to the nucleus. The protein resides in the nucleolus. Common component of the spliceosome and rRNA processing machinery. In association with the spliceosomal U4/U6.U5 tri-snRNP particle, required for splicing of pre-mRNA. In association with box C/D snoRNPs, required for processing of pre-ribosomal RNA (rRNA) and site-specific 2'-O-methylation of substrate RNAs. Essential for the accumulation and stability of U4 snRNA, U6 snRNA, and box C/D snoRNAs. This Schizosaccharomyces pombe (strain 972 / ATCC 24843) (Fission yeast) protein is 13 kDa ribonucleoprotein-associated protein (snu13).